The chain runs to 338 residues: MIQKNWQELIKPNKLHVEPGADPQRTAIVVAEPLERGFGMTLGNSLRRVLLSSLQGAAVTAIQIDGVLHEFSSIPGVREDVTDIILNIKTLGLRMHGEGPKRMHLRAVGPGEVTAGLIEVGHDIEIMDPELVLCTLDEGAKLNIEFTVETGKGYVPASQNRPEDSPIGLIPIDAIFSPVRKVAYKVENTRVGQVTDYDKLSMTVETNGAVTPDDAVALAARILQDQLQLFINFEEPTAVVEEEKKDELPFNKNLLRKVDELELSVRSANCLKNDNIIYIGDLVQKTEAEMLRTPNFGRKSLNEIKEVLAQMGLHLGMEIANWPPENIEELAKKLEEPY.

The alpha N-terminal domain (alpha-NTD) stretch occupies residues 1-234 (MIQKNWQELI…DQLQLFINFE (234 aa)). The segment at 250 to 338 (FNKNLLRKVD…ELAKKLEEPY (89 aa)) is alpha C-terminal domain (alpha-CTD).

The protein belongs to the RNA polymerase alpha chain family. As to quaternary structure, homodimer. The RNAP catalytic core consists of 2 alpha, 1 beta, 1 beta' and 1 omega subunit. When a sigma factor is associated with the core the holoenzyme is formed, which can initiate transcription.

The catalysed reaction is RNA(n) + a ribonucleoside 5'-triphosphate = RNA(n+1) + diphosphate. In terms of biological role, DNA-dependent RNA polymerase catalyzes the transcription of DNA into RNA using the four ribonucleoside triphosphates as substrates. In Paramagnetospirillum magneticum (strain ATCC 700264 / AMB-1) (Magnetospirillum magneticum), this protein is DNA-directed RNA polymerase subunit alpha.